Consider the following 89-residue polypeptide: Nitrogen regulatory protein (89 aa).

A PTS EIIA type-2 domain is found at 6-89 (TILTPGRSLV…ALLHLEAPID (84 aa)). The active-site Tele-phosphohistidine intermediate is the histidine 68.

It localises to the cytoplasm. Seems to have a role in regulating nitrogen assimilation. This chain is Nitrogen regulatory protein (ptsN), found in Pseudomonas putida (Arthrobacter siderocapsulatus).